Consider the following 1754-residue polypeptide: Probable outer membrane protein PmpB (1754 aa).

A signal peptide spans 1–14 (MSSMKWLSATAVFA). Composition is skewed to low complexity over residues 68 to 105 (NIPT…TPDP) and 212 to 232 (SETS…PSSS). Disordered regions lie at residues 68–109 (NIPT…KGGG), 190–235 (SSNS…SRAE), 252–271 (PAAQ…GSGG), 397–438 (NADA…ATAK), 621–668 (AAEN…STPS), and 1299–1332 (TSSA…ATTP). Polar residues-rich tracts occupy residues 252 to 264 (PAAQ…STPS) and 402 to 412 (ASSSPQSGSGA). 4 stretches are compositionally biased toward low complexity: residues 413–427 (TTVS…GSDS), 636–668 (PTAD…STPS), 1299–1311 (TSSA…VSSS), and 1320–1332 (SAAA…ATTP). The region spanning 1461-1754 (DDIAYNNFWV…MTSCGARMIF (294 aa)) is the Autotransporter domain.

This sequence belongs to the PMP outer membrane protein family.

The protein resides in the secreted. It is found in the cell wall. It localises to the cell outer membrane. This Chlamydia trachomatis serovar D (strain ATCC VR-885 / DSM 19411 / UW-3/Cx) protein is Probable outer membrane protein PmpB (pmpB).